We begin with the raw amino-acid sequence, 287 residues long: Protease HtpX (287 aa).

Helical transmembrane passes span 4–24 (IFLL…VMSI) and 33–53 (SGLL…SLAI). H139 lines the Zn(2+) pocket. The active site involves E140. H143 lines the Zn(2+) pocket. 2 helical membrane-spanning segments follow: residues 154–174 (LIQG…AGII) and 195–215 (AVVF…VAYF). Zn(2+) is bound at residue E220.

It belongs to the peptidase M48B family. It depends on Zn(2+) as a cofactor.

Its subcellular location is the cell inner membrane. The sequence is that of Protease HtpX from Shewanella piezotolerans (strain WP3 / JCM 13877).